The primary structure comprises 246 residues: Ribonuclease 3 (246 aa).

Residues 18–147 (FQELQKKIGI…FIGALYLDQG (130 aa)) form the RNase III domain. A Mg(2+)-binding site is contributed by Glu-60. Asp-64 is an active-site residue. Mg(2+) is bound by residues Asp-133 and Glu-136. Glu-136 is an active-site residue. The region spanning 173–242 (DFKSQLQELV…AQMALETLRA (70 aa)) is the DRBM domain.

Belongs to the ribonuclease III family. Homodimer. Requires Mg(2+) as cofactor.

It localises to the cytoplasm. It carries out the reaction Endonucleolytic cleavage to 5'-phosphomonoester.. In terms of biological role, digests double-stranded RNA. Involved in the processing of primary rRNA transcript to yield the immediate precursors to the large and small rRNAs (23S and 16S). Processes some mRNAs, and tRNAs when they are encoded in the rRNA operon. Processes pre-crRNA and tracrRNA of type II CRISPR loci if present in the organism. This chain is Ribonuclease 3, found in Geobacillus thermodenitrificans (strain NG80-2).